Consider the following 260-residue polypeptide: Octanoyltransferase (260 aa).

In terms of domain architecture, BPL/LPL catalytic spans 42–241; it reads PQVPDGLLLL…SFCQVFGLQA (200 aa). Residues 97–104, 172–174, and 185–187 contribute to the substrate site; these read RGGEVTYH, AIG, and GFA. C203 acts as the Acyl-thioester intermediate in catalysis.

The protein belongs to the LipB family.

The protein localises to the cytoplasm. The enzyme catalyses octanoyl-[ACP] + L-lysyl-[protein] = N(6)-octanoyl-L-lysyl-[protein] + holo-[ACP] + H(+). It participates in protein modification; protein lipoylation via endogenous pathway; protein N(6)-(lipoyl)lysine from octanoyl-[acyl-carrier-protein]: step 1/2. In terms of biological role, catalyzes the transfer of endogenously produced octanoic acid from octanoyl-acyl-carrier-protein onto the lipoyl domains of lipoate-dependent enzymes. Lipoyl-ACP can also act as a substrate although octanoyl-ACP is likely to be the physiological substrate. This chain is Octanoyltransferase, found in Synechococcus sp. (strain JA-3-3Ab) (Cyanobacteria bacterium Yellowstone A-Prime).